The following is a 360-amino-acid chain: Decorin (360 aa).

A signal peptide spans 1–16; that stretch reads MKATIIFLLLAQVSWA. The propeptide occupies 17–30; sequence GPFQQRGLFDFMLE. The O-linked (Xyl...) (glycosaminoglycan) serine glycan is linked to Ser-34. 2 disulfide bridges follow: Cys-55/Cys-61 and Cys-59/Cys-68. LRR repeat units lie at residues 74 to 94, 95 to 118, 119 to 142, 143 to 163, 164 to 187, 188 to 213, 214 to 234, 235 to 258, 259 to 282, 283 to 305, 306 to 335, and 336 to 360; these read DKVPKDLPPDTTLLDLQNNKI, TEIKDGDFKNLKNLHTLILVNNKI, SKISPGAFTPLLKLERLYLSKNHL, KELPEKMPKTLQELRAHENEI, TKVRKAVFNGLNQMIVVELGTNPL, KSSGIENGAFQGMKKLSYIRIADTNI, TTIPQGLPPSLTELHLEGNKI, TKVDASSLKGLNNLAKLGLSFNSI, SAVDNGTLANTPHLRELHLDNNKL, IRVPGGLAEHKYIQVVYLHNNNI, SAVGSNDFCPPGYNTKKASYSGVSLFSNPV, and QYWEIQPSTFRCVYVRSAIQLGNYK. N-linked (GlcNAc...) asparagine glycosylation is present at Asn-212. N-linked (GlcNAc...) asparagine glycans are attached at residues Asn-263 and Asn-304. Cys-314 and Cys-347 form a disulfide bridge.

This sequence belongs to the small leucine-rich proteoglycan (SLRP) family. SLRP class I subfamily. In terms of assembly, binds to type I and type II collagen, fibronectin and TGF-beta. Forms a ternary complex with MFAP2 and ELN. Interacts with DPT. The attached glycosaminoglycan chain can be either chondroitin sulfate or dermatan sulfate depending upon the tissue of origin.

The protein localises to the secreted. It is found in the extracellular space. The protein resides in the extracellular matrix. In terms of biological role, may affect the rate of fibrils formation. The sequence is that of Decorin (DCN) from Canis lupus familiaris (Dog).